The sequence spans 174 residues: MAAANRGSKPRVRSIRFAAGHDAEGSQSHVHFDEKLHDSVVMVTQESDNSFLVKVGFLKILHRYEITFTLPPVRRLSKDIRETPVHSLHLKLLSVTPTSEGYSIKCEYSAHKEGVLKEEMLLACEGDIGTCVRVTVQARVMDRHHGTPMLLDGVKCVGAELEYDSEQSDWLGFD.

Alanine 2 carries the N-acetylalanine modification. The residue at position 147 (threonine 147) is a Phosphothreonine.

The protein belongs to the ADISSP family. As to expression, expression is adipose-specific and highly brown adipose tissue-enriched.

The protein resides in the secreted. Its function is as follows. Adipocyte-secreted protein (adipokine) that acts as a key regulator for white adipose tissue (WAT) thermogenesis and glucose homeostasis at least in part through activation of protein kinase A (PKA). The chain is Adipose-secreted signaling protein from Mus musculus (Mouse).